A 211-amino-acid polypeptide reads, in one-letter code: Superoxide dismutase [Cu-Zn], chloroplastic (211 aa).

The N-terminal 57 residues, 1-57, are a transit peptide targeting the chloroplast; sequence MQAILAAAMAAQTLLFSATAPPASLFQSPSSARPFHSLRLAAGPAGAAAARALVVAD. Residues His103, His105, and His120 each coordinate Cu cation. Cysteines 114 and 203 form a disulfide. Zn(2+) contacts are provided by His120, His128, His137, and Asp140. A Cu cation-binding site is contributed by His177.

This sequence belongs to the Cu-Zn superoxide dismutase family. In terms of assembly, homotetramer. It depends on Cu cation as a cofactor. Requires Zn(2+) as cofactor.

It is found in the plastid. The protein resides in the chloroplast. It carries out the reaction 2 superoxide + 2 H(+) = H2O2 + O2. Destroys radicals which are normally produced within the cells and which are toxic to biological systems. This is Superoxide dismutase [Cu-Zn], chloroplastic (SODCP) from Oryza sativa subsp. japonica (Rice).